A 217-amino-acid polypeptide reads, in one-letter code: Large ribosomal subunit protein uL1 (217 aa).

The protein belongs to the universal ribosomal protein uL1 family. Component of the large ribosomal subunit (LSU). Mature N.crassa ribosomes consist of a small (40S) and a large (60S) subunit. The 40S small subunit contains 1 molecule of ribosomal RNA (18S rRNA) and at least 32 different proteins. The large 60S subunit contains 3 rRNA molecules (26S, 5.8S and 5S rRNA) and at least 42 different proteins. uL1 forms part of the L1 stalk.

The protein resides in the cytoplasm. Functionally, component of the ribosome, a large ribonucleoprotein complex responsible for the synthesis of proteins in the cell. The small ribosomal subunit (SSU) binds messenger RNAs (mRNAs) and translates the encoded message by selecting cognate aminoacyl-transfer RNA (tRNA) molecules. The large subunit (LSU) contains the ribosomal catalytic site termed the peptidyl transferase center (PTC), which catalyzes the formation of peptide bonds, thereby polymerizing the amino acids delivered by tRNAs into a polypeptide chain. The nascent polypeptides leave the ribosome through a tunnel in the LSU and interact with protein factors that function in enzymatic processing, targeting, and the membrane insertion of nascent chains at the exit of the ribosomal tunnel. uL1 forms part of the L1 stalk, a mobile element that plays a role in evacuating the exit-site tRNA. The chain is Large ribosomal subunit protein uL1 (crp-74) from Neurospora crassa (strain ATCC 24698 / 74-OR23-1A / CBS 708.71 / DSM 1257 / FGSC 987).